The sequence spans 273 residues: Short-chain dehydrogenase fogB (273 aa).

The NADP(+) site is built by isoleucine 16, aspartate 66, arginine 128, tyrosine 174, lysine 178, valine 207, and threonine 209. Tyrosine 174 serves as the catalytic Proton donor. Lysine 178 serves as the catalytic Lowers pKa of active site Tyr.

This sequence belongs to the short-chain dehydrogenases/reductases (SDR) family.

Short-chain dehydrogenase; part of the gene cluster that mediates the biosynthesis of flavoglaucin and congeners (including aspergin, dihydroauroglaucin and auroglaucin), prenylated salicylaldehyde derivatives carrying a saturated or an unsaturated C-7 side chain. The PKS fogA releases the carboxylic acid (8E,10E,12E)-3,5,7-trihydroxytetradeca-8,10,12-trienoic acid as its product, as well as derivatives with one and two double bonds. FogA is indeed able to reduce the initial triketide, thus being at least partially responsible for the differently saturated heptyl side chains of flavoglaucin congeners. The oxidoreductases fogB, fogC and fogD modify the nascent polyketide in fogA-bound form and, together, fogA, fogB, fogC and fogD are necessary for the formation of the aromatic core and the cyclized PKS products are released as salicyl alcohols. In particular, fogB is responsible for oxidation of a hydroxyl group or reduction of remaining double bond(s) at the C-7 residue whereas fogD is probably involved in the reductive release of the modified PKS products. The cytochrome P450 monooxygenase fogE is then responsible for the hydroxylation at C-3 of the benzene ring. The fogE products are substrates of the prenyltransferase fogH and the prenylated benzyl alcohols are subsequently oxidized by the fogF to produce the final aryl aldehydes flavoglaucin and congeners. The short-chain dehydrogenase fogG does not seem to be involved in the biosynthesis of the prenylated salicylaldehyde derivatives. This Aspergillus ruber (strain CBS 135680) protein is Short-chain dehydrogenase fogB.